The chain runs to 238 residues: 7-cyano-7-deazaguanine synthase (238 aa).

Residue 12 to 22 participates in ATP binding; the sequence is FSGGQDSTTCL. Residues C191, C200, C203, and C206 each contribute to the Zn(2+) site.

This sequence belongs to the QueC family. Requires Zn(2+) as cofactor.

The catalysed reaction is 7-carboxy-7-deazaguanine + NH4(+) + ATP = 7-cyano-7-deazaguanine + ADP + phosphate + H2O + H(+). It functions in the pathway purine metabolism; 7-cyano-7-deazaguanine biosynthesis. Its function is as follows. Catalyzes the ATP-dependent conversion of 7-carboxy-7-deazaguanine (CDG) to 7-cyano-7-deazaguanine (preQ(0)). The polypeptide is 7-cyano-7-deazaguanine synthase (Shewanella oneidensis (strain ATCC 700550 / JCM 31522 / CIP 106686 / LMG 19005 / NCIMB 14063 / MR-1)).